The primary structure comprises 358 residues: uncharacterized protein (358 aa).

A signal peptide spans 1-15; that stretch reads MITGKTISLPLSVIA. The N-palmitoyl cysteine moiety is linked to residue C16. C16 carries the S-diacylglycerol cysteine lipid modification. The segment at 331–358 is disordered; it reads PCGTGSPGNPPPNINSVAQHRISTNTNR. Polar residues predominate over residues 347–358; that stretch reads VAQHRISTNTNR.

It localises to the cell membrane. This is an uncharacterized protein from Sinorhizobium fredii (strain NBRC 101917 / NGR234).